The primary structure comprises 291 residues: Glycine--tRNA ligase alpha subunit (291 aa).

Belongs to the class-II aminoacyl-tRNA synthetase family. Tetramer of two alpha and two beta subunits.

Its subcellular location is the cytoplasm. The catalysed reaction is tRNA(Gly) + glycine + ATP = glycyl-tRNA(Gly) + AMP + diphosphate. The protein is Glycine--tRNA ligase alpha subunit of Microcystis aeruginosa (strain NIES-843 / IAM M-2473).